The sequence spans 147 residues: Small ribosomal subunit protein uS12 (147 aa).

Belongs to the universal ribosomal protein uS12 family. In terms of assembly, part of the 30S ribosomal subunit.

With S4 and S5 plays an important role in translational accuracy. Located at the interface of the 30S and 50S subunits. The chain is Small ribosomal subunit protein uS12 from Saccharolobus solfataricus (strain ATCC 35092 / DSM 1617 / JCM 11322 / P2) (Sulfolobus solfataricus).